The primary structure comprises 266 residues: Thymidylate synthase (266 aa).

Residue Arg24 participates in dUMP binding. His54 contributes to the (6R)-5,10-methylene-5,6,7,8-tetrahydrofolate binding site. Residue 129-130 (RR) participates in dUMP binding. Cys149 functions as the Nucleophile in the catalytic mechanism. Residues 169–172 (RSAD), Asn180, and 210–212 (HIY) contribute to the dUMP site. Asp172 serves as a coordination point for (6R)-5,10-methylene-5,6,7,8-tetrahydrofolate. Ala265 contacts (6R)-5,10-methylene-5,6,7,8-tetrahydrofolate.

This sequence belongs to the thymidylate synthase family. Bacterial-type ThyA subfamily. In terms of assembly, homodimer.

Its subcellular location is the cytoplasm. It catalyses the reaction dUMP + (6R)-5,10-methylene-5,6,7,8-tetrahydrofolate = 7,8-dihydrofolate + dTMP. It functions in the pathway pyrimidine metabolism; dTTP biosynthesis. Its function is as follows. Catalyzes the reductive methylation of 2'-deoxyuridine-5'-monophosphate (dUMP) to 2'-deoxythymidine-5'-monophosphate (dTMP) while utilizing 5,10-methylenetetrahydrofolate (mTHF) as the methyl donor and reductant in the reaction, yielding dihydrofolate (DHF) as a by-product. This enzymatic reaction provides an intracellular de novo source of dTMP, an essential precursor for DNA biosynthesis. This chain is Thymidylate synthase, found in Mycobacterium bovis (strain ATCC BAA-935 / AF2122/97).